A 250-amino-acid chain; its full sequence is Diaminopimelate epimerase (250 aa).

Residues N11 and N60 each contribute to the substrate site. C69 acts as the Proton donor in catalysis. Substrate contacts are provided by residues 70–71 (GN), N164, and 182–183 (ER). C192 functions as the Proton acceptor in the catalytic mechanism. 193–194 (GT) is a binding site for substrate.

It belongs to the diaminopimelate epimerase family. Homodimer.

Its subcellular location is the cytoplasm. The enzyme catalyses (2S,6S)-2,6-diaminopimelate = meso-2,6-diaminopimelate. It participates in amino-acid biosynthesis; L-lysine biosynthesis via DAP pathway; DL-2,6-diaminopimelate from LL-2,6-diaminopimelate: step 1/1. In terms of biological role, catalyzes the stereoinversion of LL-2,6-diaminopimelate (L,L-DAP) to meso-diaminopimelate (meso-DAP), a precursor of L-lysine and an essential component of the bacterial peptidoglycan. This Nitratiruptor sp. (strain SB155-2) protein is Diaminopimelate epimerase.